A 180-amino-acid polypeptide reads, in one-letter code: Adenosine 5'-phosphosulfate reductase (180 aa).

[4Fe-4S] cluster-binding residues include C57, C58, C140, and C143. The Nucleophile; cysteine thiosulfonate intermediate role is filled by C168.

The protein belongs to the PAPS reductase family. CysH subfamily. [4Fe-4S] cluster serves as cofactor.

The protein resides in the cytoplasm. The catalysed reaction is [thioredoxin]-disulfide + sulfite + AMP + 2 H(+) = adenosine 5'-phosphosulfate + [thioredoxin]-dithiol. Its pathway is sulfur metabolism; hydrogen sulfide biosynthesis; sulfite from sulfate. Its function is as follows. Catalyzes the formation of sulfite from adenosine 5'-phosphosulfate (APS) using thioredoxin as an electron donor. The polypeptide is Adenosine 5'-phosphosulfate reductase (Rhizobium tropici).